An 80-amino-acid polypeptide reads, in one-letter code: Large ribosomal subunit protein bL31B (80 aa).

This sequence belongs to the bacterial ribosomal protein bL31 family. Type B subfamily. Part of the 50S ribosomal subunit.

This chain is Large ribosomal subunit protein bL31B, found in Exiguobacterium sp. (strain ATCC BAA-1283 / AT1b).